Here is a 127-residue protein sequence, read N- to C-terminus: Protein ApaG (127 aa).

The region spanning 3–127 (DDPRYRVEVE…FVLSVPRTLH (125 aa)) is the ApaG domain.

In Xanthomonas oryzae pv. oryzae (strain MAFF 311018), this protein is Protein ApaG.